Here is a 412-residue protein sequence, read N- to C-terminus: Interferon-inducible GTPase 5 (412 aa).

Residues 51–234 (TRLEVGVTGE…PMLVTTWEHD (184 aa)) enclose the IRG-type G domain. GTP-binding positions include 60–67 (ESGAGKSS), 85–89 (TGVVE), and 215–217 (SNL). Phosphoserine occurs at positions 246 and 303.

Belongs to the TRAFAC class dynamin-like GTPase superfamily. IRG family. Interacts with PLIN2/ADRP and COX4I1/COXIV. As to expression, expressed in spermatozoa tails from the testis and epididymis, where it may be a component of the fibrous sheath (at protein level).

It is found in the cell projection. The protein localises to the cilium. It localises to the flagellum. Its subcellular location is the lipid droplet. The catalysed reaction is GTP + H2O = GDP + phosphate + H(+). Its function is as follows. Required for sperm motility and therefore male fertility, via positive regulation of spermatozoa fibrous sheath formation. The protein is Interferon-inducible GTPase 5 of Mus musculus (Mouse).